The chain runs to 402 residues: Enoyl-[acyl-carrier-protein] reductase [NADH] (402 aa).

NAD(+)-binding positions include 48–53 (GASSGY), 74–75 (FE), 111–112 (DA), and 140–141 (LA). Position 226 (tyrosine 226) interacts with substrate. The active-site Proton donor is the tyrosine 236. NAD(+) is bound by residues lysine 245 and 274–276 (VVT).

This sequence belongs to the TER reductase family. Monomer.

The enzyme catalyses a 2,3-saturated acyl-[ACP] + NAD(+) = a (2E)-enoyl-[ACP] + NADH + H(+). It participates in lipid metabolism; fatty acid biosynthesis. In terms of biological role, involved in the final reduction of the elongation cycle of fatty acid synthesis (FAS II). Catalyzes the reduction of a carbon-carbon double bond in an enoyl moiety that is covalently linked to an acyl carrier protein (ACP). This is Enoyl-[acyl-carrier-protein] reductase [NADH] from Xanthomonas campestris pv. campestris (strain 8004).